The chain runs to 212 residues: Large ribosomal subunit protein uL4 (212 aa).

The protein belongs to the universal ribosomal protein uL4 family. In terms of assembly, part of the 50S ribosomal subunit.

Its function is as follows. One of the primary rRNA binding proteins, this protein initially binds near the 5'-end of the 23S rRNA. It is important during the early stages of 50S assembly. It makes multiple contacts with different domains of the 23S rRNA in the assembled 50S subunit and ribosome. Forms part of the polypeptide exit tunnel. This chain is Large ribosomal subunit protein uL4, found in Caulobacter vibrioides (strain ATCC 19089 / CIP 103742 / CB 15) (Caulobacter crescentus).